A 274-amino-acid chain; its full sequence is Methionine aminopeptidase B (274 aa).

His-102 provides a ligand contact to substrate. Positions 120, 131, and 194 each coordinate a divalent metal cation. His-201 contacts substrate. A divalent metal cation-binding residues include Glu-227 and Glu-258.

It belongs to the peptidase M24A family. Methionine aminopeptidase type 1 subfamily. Monomer. The cofactor is Co(2+). Requires Zn(2+) as cofactor. Mn(2+) serves as cofactor. It depends on Fe(2+) as a cofactor.

It catalyses the reaction Release of N-terminal amino acids, preferentially methionine, from peptides and arylamides.. Functionally, removes the N-terminal methionine from nascent proteins. The N-terminal methionine is often cleaved when the second residue in the primary sequence is small and uncharged (Met-Ala-, Cys, Gly, Pro, Ser, Thr, or Val). Requires deformylation of the N(alpha)-formylated initiator methionine before it can be hydrolyzed. This Synechocystis sp. (strain ATCC 27184 / PCC 6803 / Kazusa) protein is Methionine aminopeptidase B.